The following is a 182-amino-acid chain: Protein LIGHT-DEPENDENT SHORT HYPOCOTYLS 5 (182 aa).

A compositionally biased stretch (low complexity) spans 1-16 (MEGETAAKAAASSSSS). Disordered stretches follow at residues 1 to 22 (MEGE…RYES) and 138 to 168 (ARGI…DAEG). One can recognise an ALOG domain in the interval 19–147 (RYESQKRRDW…ARGIPYDKKK (129 aa)). The Nuclear localization signal signature appears at 145-149 (KKKRK).

The protein belongs to the plant homeotic and developmental regulators ALOG protein family.

Its subcellular location is the nucleus. In terms of biological role, probable transcription regulator that acts as a developmental regulator by promoting cell growth in response to light. The chain is Protein LIGHT-DEPENDENT SHORT HYPOCOTYLS 5 (LSH5) from Arabidopsis thaliana (Mouse-ear cress).